We begin with the raw amino-acid sequence, 424 residues long: Serine--tRNA ligase (424 aa).

Basic and acidic residues predominate over residues 1–15 (MIDPKLLRTDPDAVR). The interval 1-27 (MIDPKLLRTDPDAVRRSQAARGEDSSV) is disordered. 230–232 (TSE) provides a ligand contact to L-serine. ATP contacts are provided by residues 261 to 263 (RRE) and valine 277. L-serine is bound at residue glutamate 284. 348–351 (EITS) is a binding site for ATP. Threonine 382 contributes to the L-serine binding site.

Belongs to the class-II aminoacyl-tRNA synthetase family. Type-1 seryl-tRNA synthetase subfamily. Homodimer. The tRNA molecule binds across the dimer.

Its subcellular location is the cytoplasm. It carries out the reaction tRNA(Ser) + L-serine + ATP = L-seryl-tRNA(Ser) + AMP + diphosphate + H(+). The catalysed reaction is tRNA(Sec) + L-serine + ATP = L-seryl-tRNA(Sec) + AMP + diphosphate + H(+). It participates in aminoacyl-tRNA biosynthesis; selenocysteinyl-tRNA(Sec) biosynthesis; L-seryl-tRNA(Sec) from L-serine and tRNA(Sec): step 1/1. Functionally, catalyzes the attachment of serine to tRNA(Ser). Is also able to aminoacylate tRNA(Sec) with serine, to form the misacylated tRNA L-seryl-tRNA(Sec), which will be further converted into selenocysteinyl-tRNA(Sec). In Cutibacterium acnes (strain DSM 16379 / KPA171202) (Propionibacterium acnes), this protein is Serine--tRNA ligase.